The sequence spans 140 residues: Bacilliredoxin STH2395 (140 aa).

The protein belongs to the bacilliredoxin family.

This chain is Bacilliredoxin STH2395, found in Symbiobacterium thermophilum (strain DSM 24528 / JCM 14929 / IAM 14863 / T).